Consider the following 5263-residue polypeptide: MRVKTFVILCCALQYVAYTNANINDFDEDYFGSDVTVQSSNTTDEIIRDASGAVIEEQITTKKMQRKNKNHGILGKNEKMIKTFVITTDSDGNESIVEEDVLMKTLSDGTVAQSYVAADAGAYSQSGPYVSNSGYSTHQGYTSDFSTSAAVGAGAGAGAAAGSGAGAGAGYGAASGAGAGAGAGAGAGYGTGAGAGAGAGYGAGAGAGAGAGYGAGAGAGAGAGYGAGAGAGAGAGYGAGAGAGAGAGYGAGAGAGAGAGYGAASGAGAGAGYGQGVGSGAASGAGAGAGAGSAAGSGAGAGAGTGAGAGYGAGAGAGAGAGYGAASGTGAGYGAGAGAGYGGASGAGAGAGAGAGAGAGAGYGTGAGYGAGAGAGAGAGAGAGYGAGAGAGYGAGYGVGAGAGYGAGYGAGAGSGAASGAGSGAGAGSGAGAGSGAGAGSGAGAGSGAGAGSGAGAGSGAGAGSGAGAGSGTGAGSGAGAGYGAGAGAGYGAGAGSGAASGAGAGSGAGAGSGAGAGSGAGAGSGAGAGSGAGAGYGAGAGAGYGAGAGAGYGAGAGVGYGAGAGSGAASGAGAGSGAGAGSGAGAGSGAGAGSGAGAGSGAGAGSGAGAGSGAGAGSGAGAGSGAGVGYGAGVGAGYGAGYGAGAGAGYGAGAGSGAASGAGAGAGAGAGTGSSGFGPYVANGGYSRSDGYEYAWSSDFGTGSGAGAGSGAGAGSGAGAGSGAGAGSGAGAGSGAGAGYGAGVGVGYGAGYGAGAGAGYGAGAGSGAASGAGAGSGAGAGSGAGAGSGAGAGSGAGAGSGAGAGSGAGAGSGAGAGSGAGAGSGAGAGSGAGVGSGAGAGSGAGAGVGYGAGAGVGYGAGAGSGAASGAGAGSGAGAGSGAGAGSGAGAGSGAGAGSGAGAGSGAGAGSGAGAGSGAGAGSGAGVGYGAGVGAGYGAGYGAGAGAGYGAGAGSGAASGAGAGSGAGAGSGAGAGSGAGAGSGAGAGSGAGAGSGAGAGSGAGAGSGAGAGSGAGAGSGAGAGSGAGAGYGAGAGAGYGAGYGAGAGAGYGAGAGSGAASGAGSGAGAGSGAGAGAGSGAGAGSGAGAGSGAGAGSGAGAGSGAGAGSGAGAGYGAGVGAGYGAGYGAGAGAGYGAGAGSGAASGAGAGSGAGAGSGAGAGSGAGAGSGAGAGSGAGAGSGAGAGSGAGVGYGAGYGAGAGAGYGAGAGSGAASGAGAGAGAGAGTGSSGFGPYVAHGGYSGYEYAWSSESDFGTGSGAGAGSGAGAGSGAGAGSGAGAGSGAGYGAGVGAGYGAGYGAGAGAGYGAGAGSGAGSGAGAGSGAGAGSGAGAGSGAGAGSGAGAGSGAGAGSGAGAGSGAGAGSGAGAGYGAGYGAGAGAGYGAGAGSGAGSGAGAGSGAGAGSGAGAGSGAGAGSGAGAGSGAGAGSGAGAGSGAGAGYGAGVGAGYGAGYGAGAGAGYGAGAGSGAGSGAGAGSGAGAGSGAGAGSGAGVGSGAGAGSGAGAGSGAGAGSGAGAGYGAGYGAGAGAGYGAGAGSGAGSGAGAGSGAGAGSGAGAGSGAGAGSGAGAGSGAGAGSGAGAGSGAGVGYGAGVGAGYGAGYGAGAGAGYGAGAGSGAASGAGAGAGAGAGTGSSGFGPYVANGGYSGYEYAWSSESDFGTGSGAGAGSGAGAGSGAGAGSGAGAGSGAGAGYGAGYGAGAGAGYGAGAGSGAGSGAGAGSGAGAGSGAGAGSGAGAGSGAGAGSGAGAGSGAGAGSGAGSGSGAGAGSGAGAGSGAGAGYGAGVGAGYGVGYGAGAGAGYGAGAGSGAASGAGAGAGAGAGTGSSGFGPYVAHGGYSGYEYAWSSESDFGTGSGAGAGSGAGAGSGAGAGSGAGAGSGAGAGSGAGAGSGAGAGYGAGVGAGYGAAYGAGAGAGYGAGAGSGAASGAGAGSGAGAGSGAGAGSGAGAGSGAGAGSGAGAGSGAGAGSGAGAGSGAGAGSGAGAGSGAGAGYGAGAGAGYGAGAGSGAGSGAGAGSGAGAGSGAGAGSGAGAGSGAGAGSGAGSGSGAGAGSGAGAGSGAGAGYGAGVGAGYGAGYGAGAGAGYGAGAGSGAGSGAGAGSGAGAGYGAGAGAGYGAGYGAGAGAGYGAGAGTGAGSGAGAGSGAGAGSGAGAGSGAGAGSGAGAGSGAGAGSGAGSGSGAGAGSGAGAGSGAGAGSGAGAGSGAGAGSGAGAGYGAGAGAGYGAGYGAGAGAGYGAGAGSGAGSGAGAGSGAGAGSGAGAGSGAGAGYGAGYGAGAGSGAASGAGAGAGAGAGTGSSGFGPYVAHGGYSGYEYAWSSESDFGTGSGAGAGSGAGAGAGAGAGSGAGAGYGAGVGAGYGAGYGAGAGAGYGAGAGSGTGSGAGAGSGAGAGYGAGVGAGYGAGAGSGAAFGAGAGAGAGSGAGAGSGAGAGSGAGAGSGAGAGSGAGAGYGAGYGAGVGAGYGAGAGSGAASGAGAGSGAGAGSGAGAGSGAGAGSGAGAGSGAGAGYGAGVGAGYGAGYGAGAGAGYGAGAGSGAASGAGAGSGAGAGAGSGAGAGSGAGAGSGAGAGSGAGSGAGAGSGAGAGSGAGAGYGAGAGSGAASGAGAGAGAGAGTGSSGFGPYVANGGYSGYEYAWSSESDFGTGSGAGAGSGAGAGSGAGAGSGAGAGSGAGAGYGAGVGAGYGAGYGAGAGAGYGAGAGSGAGSGAGAGSGAGAGSGAGAGSGAGAGSGAGAGSGAGAGSGAGAGYGAGAGSGAASGAGAGSGAGAGSGAGAGSGAGAGSGAGAGSGAGAGSGAGAGYGAGVGAGYGVGYGAGAGAGYGAGAGSGAGSGAGAGSGAGAGSGAGAGSGAGAGSGAGSGAGAGSGAGAGSGAGAGSGAGSGAGAGSGAGAGYGVGYGAGAGAGYGAGAGSGAGSGAGAGSGAGAGSGAGAGSGAGSGAGAGSGAGAGSGAGAGSGAGAGYGAGVGAGYGVGYGAGAGAGYGAGAGSGAGSGAGAGSGAGAGSGAGAGSGAGAGSGAGAGSGAGAGSGAGAGSGAGSGAGAGSGAGAGSGAGAGSGAGAGSGAGSGAGAGSGAGAGSGAGAGSGAGAGYGAGVGAGYGVGYGAGVGAGYGAGAGSGAASGAGAGSGAGAGAGSGAGAGSGAGAGSGAGAGSGAGAGSGAGAGSGAGAGYGAGYGAGVGAGYGAGAGVGYGAGAGAGYGAGAGSGAASGAGAGAGSGAGAGTGAGAGSGAGAGYGAGAGSGAASGAGAGAGAGAGTGSSGFGPYVANGGYSGYEYAWSSESDFGTGSGAGAGSGAGAGSGAGAGSGAGAGSGAGAGYGAGVGAGYGAGAGSGAGSGAGAGSGAGAGSGAGAGSGAGAGSGAGAGYGAGAGSGTGSGAGAGSGAGAGSGAGAGSGAGAGSGAGAGSGAGAGSGVGAGYGVGYGAGAGAGYGVGYGAGAGAGYGAGAGSGTGSGAGAGSGAGAGSGAGAGSGAGAGSGAGAGSGAGAGSGAGAGYGAGVGAGYGVGYGAGAGAGYGAGAGSGAGSGAGAGSGAGAGSGAGAGSGAGAGSGAGSGAGAGSGAGAGSGAGAGSGAGSGAGAGSGAGAGYGVGYGAGAGAGYGAGAGSGAGSGAGAGSGAGAGSGAGAGSGAGSGAGAGSGAGAGSGAGAGSGAGAGYGAGVGAGYGVGYGAGAGAGYGAGAGSGAGSGAGAGSGAGAGSGAGAGSGAGAGSGAGAGSGAGAGSGAGAGSGAGSGAGAGSGAGAGSGAGAGSGAGAGYGAGVGAGYGVGYGAGAGAGYGAGAGSGAASGAGAGAGAGAGTGSSGFGPYVANGGYSGYEYAWSSESDFGTGSGAGAGSGAGAGSGAGAGYGAGYGAGVGAGYGAGAGVGYGAGAGAGYGAGAGSGAASGAGAGAGAGAGSGAGAGSGAGAGAGSGAGAGYGAGYGIGVGAGYGAGAGVGYGAGAGAGYGAGAGSGAASGAGAGSGAGAGSGAGAGSGAGAGSGAGAGSGAGAGSGAGAGYGAGYGAGVGAGYGAGAGVGYGAGAGAGYGAGAGSGAASGAGAGAGAGAGAGSGAGAGSGAGAGSGAGAGSGAGAGSGAGAGSGAGAGSGAGAGSGAGAGSGAGAGYGAGVGAGYGAGYGGAGAGYGAGAGSGAASGAGAGSGAGAGSGAGAGSGAGAGSGAGAGSGAGAGYGAGAGSGAASGAGAGAGAGAGTGSSGFGPYVNGGYSGYEYAWSSESDFGTGSGAGAGSGAGAGSGAGAGYGAGVGAGYGAGYGAGAGAGYGAGAGSGAASGAGAGSGAGAGSGAGAGSGAGAGSGAGSGAGAGSGAGAGSGAGAGSGAGAGSGAGAGSGAGAGYGAGVGAGYGAGYGAGAGAGYGAGAGSGAASGAGAGSGAGAGAGSGAGAGSGAGAGSGAGAGSGAGAGSGAGAGSGAGSGAGAGSGAGAGYGAGYGAGVGAGYGAGAGVGYGAGAGAGYGAGAGSGAASGAGAGSGSGAGSGAGAGSGAGAGSGAGAGAGSGAGAGSGAGAGSGAGAGYGAGYGAGAGSGAASGAGAGAGAGAGTGSSGFGPYVANGGYSGYEYAWSSESDFGTGSGAGAGSGAGAGSGAGAGYGAGVGAGYGAGYGAGAGAGYGAGAGSGAGSGAGAGSGAGAGSGAGAGSGAGAGSGAGAGSGAGAGSGAGAGSGAGAGYGAGYGAGAGAGYGAGAGVGYGAGAGAGYGAGAGSGAGSGAGAGSGSGAGAGSGSGAGSGAGAGSGAGAGSGAGAGSGAGAGSGAGAGSGAGAGSGAGAGYGAGYGIGVGAGYGAGAGVGYGAGAGAGYGAGAGSGAASGAGAGSGAGAGSGAGAGSGAGAGSGAGAGSGAGAGSGAGAGSGAGAGSGAGAGSGAGAGYGAGAGVGYGAGAGSGAASGAGAGSGAGAGSGAGAGSGAGAGSGAGAGSGAGAGSGAGAGSGAGSGAGAGSGAGAGYGAGYGAGVGAGYGAGAGYGAGYGVGAGAGYGAGAGSGAGSGAGAGSGAGAGSGAGAGSGAGAGSGAGAGSGAGSGAGAGYGAGAGAGYGAGAGAGYGAGAGSGAASGAGAGAGAGSGAGAGSGAGAGSGAGSGAGAGSGAGAGYGAGAGSGAASGAGAGSGAGAGAGAGAGAGSGAGAGSGAGAGYGAGAGSGAASGAGAGAGAGTGSSGFGPYVANGGYSRREGYEYAWSSKSDFETGSGAASGAGAGAGSGAGAGSGAGAGSGAGAGSGAGAGGSVSYGAGRGYGQGAGSAASSVSSASSRSYDYSRRNVRKNCGIPRRQLVVKFRALPCVNC.

The N-terminal stretch at 1–21 is a signal peptide; it reads MRVKTFVILCCALQYVAYTNA. Positions 149 to 5206 are highly repetitive; the sequence is AAVGAGAGAG…GSGAGAGGSV (5058 aa). C5260 and C5263 form a disulfide bridge.

In terms of assembly, silk fibroin elementary unit consists in a disulfide-linked heavy and light chain and a p25 glycoprotein in molar ratios of 6:6:1. This results in a complex of approximately 2.3 MDa. The interchain disulfide bridge is essential for the intracellular transport and secretion of fibroin. Produced exclusively in the posterior (PSG) section of silk glands, which are essentially modified salivary glands.

Functionally, core component of the silk filament; a strong, insoluble and chemically inert fiber. This is Fibroin heavy chain (FIBH) from Bombyx mori (Silk moth).